A 446-amino-acid polypeptide reads, in one-letter code: Dihydroorotate dehydrogenase (quinone), mitochondrial (446 aa).

A mitochondrion-targeting transit peptide spans 1–13 (MHSRPLPTLGRHA). A helical membrane pass occupies residues 40-57 (AILYTAGILGGAFAGYYL). FMN is bound by residues 125–129 (AGLDK) and Ser-149. Lys-129 lines the substrate pocket. 174–178 (NRYGF) provides a ligand contact to substrate. FMN is bound by residues Asn-222 and Asn-252. Residues Asn-252 and 252-257 (NVSSPN) contribute to the substrate site. The Nucleophile role is filled by Ser-255. Residues Lys-303 and Ser-331 each contribute to the FMN site. A substrate-binding site is contributed by 332–333 (NT). Residues Gly-357, Gly-387, and 408–409 (YT) contribute to the FMN site.

Belongs to the dihydroorotate dehydrogenase family. Type 2 subfamily. FMN is required as a cofactor.

The protein localises to the mitochondrion inner membrane. It catalyses the reaction (S)-dihydroorotate + a quinone = orotate + a quinol. The protein operates within pyrimidine metabolism; UMP biosynthesis via de novo pathway; orotate from (S)-dihydroorotate (quinone route): step 1/1. The activity is dependent of the presence of oxygen. Catalyzes the conversion of dihydroorotate to orotate with quinone as electron acceptor. The protein is Dihydroorotate dehydrogenase (quinone), mitochondrial (URA9) of Lachancea kluyveri (strain ATCC 58438 / CBS 3082 / BCRC 21498 / NBRC 1685 / JCM 7257 / NCYC 543 / NRRL Y-12651) (Yeast).